Reading from the N-terminus, the 541-residue chain is GMP synthase [glutamine-hydrolyzing] (541 aa).

The Glutamine amidotransferase type-1 domain maps to 15-209 (TILTLDFGSQ…AVNICGCKQN (195 aa)). Cys91 functions as the Nucleophile in the catalytic mechanism. Residues His183 and Glu185 contribute to the active site. Residues 210-416 (WTMARFVDQE…LGIAHEMVMR (207 aa)) enclose the GMPS ATP-PPase domain. Position 238-244 (238-244 (SGGVDST)) interacts with ATP. Residues Arg311, Asp478, Lys533, and Glu539 each contribute to the XMP site.

As to quaternary structure, homodimer. Mg(2+) serves as cofactor.

It is found in the cytoplasm. It localises to the cytosol. It catalyses the reaction XMP + L-glutamine + ATP + H2O = GMP + L-glutamate + AMP + diphosphate + 2 H(+). It functions in the pathway purine metabolism; GMP biosynthesis; GMP from XMP (L-Gln route): step 1/1. Catalyzes the conversion of xanthine monophosphate (XMP) to GMP in the presence of glutamine and ATP through an adenyl-XMP intermediate. This Aspergillus oryzae (strain ATCC 42149 / RIB 40) (Yellow koji mold) protein is GMP synthase [glutamine-hydrolyzing] (gua1).